The primary structure comprises 210 residues: Small ribosomal subunit protein uS4 (210 aa).

The interval 30 to 49 is disordered; sequence EKSSLEKRKYPPGLPPKKKG. An S4 RNA-binding domain is found at 99–162; sequence RRLDNVLYRM…QKSAFIEENI (64 aa).

This sequence belongs to the universal ribosomal protein uS4 family. Part of the 30S ribosomal subunit. Contacts protein S5. The interaction surface between S4 and S5 is involved in control of translational fidelity.

One of the primary rRNA binding proteins, it binds directly to 16S rRNA where it nucleates assembly of the body of the 30S subunit. Its function is as follows. With S5 and S12 plays an important role in translational accuracy. This chain is Small ribosomal subunit protein uS4, found in Leptospira biflexa serovar Patoc (strain Patoc 1 / Ames).